Consider the following 344-residue polypeptide: Phosphoribosylformylglycinamidine cyclo-ligase (344 aa).

It belongs to the AIR synthase family.

It localises to the cytoplasm. The enzyme catalyses 2-formamido-N(1)-(5-O-phospho-beta-D-ribosyl)acetamidine + ATP = 5-amino-1-(5-phospho-beta-D-ribosyl)imidazole + ADP + phosphate + H(+). Its pathway is purine metabolism; IMP biosynthesis via de novo pathway; 5-amino-1-(5-phospho-D-ribosyl)imidazole from N(2)-formyl-N(1)-(5-phospho-D-ribosyl)glycinamide: step 2/2. The polypeptide is Phosphoribosylformylglycinamidine cyclo-ligase (Bifidobacterium animalis subsp. lactis (strain AD011)).